Reading from the N-terminus, the 543-residue chain is Chaperonin GroEL (543 aa).

Residues 29 to 32 (TLGP), 86 to 90 (DGTTT), glycine 413, 477 to 479 (DAL), and aspartate 493 contribute to the ATP site.

The protein belongs to the chaperonin (HSP60) family. As to quaternary structure, forms a cylinder of 14 subunits composed of two heptameric rings stacked back-to-back. Interacts with the co-chaperonin GroES.

Its subcellular location is the cytoplasm. The enzyme catalyses ATP + H2O + a folded polypeptide = ADP + phosphate + an unfolded polypeptide.. Functionally, together with its co-chaperonin GroES, plays an essential role in assisting protein folding. The GroEL-GroES system forms a nano-cage that allows encapsulation of the non-native substrate proteins and provides a physical environment optimized to promote and accelerate protein folding. The polypeptide is Chaperonin GroEL (Clostridium novyi (strain NT)).